The chain runs to 109 residues: Mitochondrial pyruvate carrier 1 (109 aa).

The residue at position 2 (alanine 2) is an N-acetylalanine. The Mitochondrial matrix segment spans residues 2–20 (AGALVRKAADYVRSKDFRD). Residues 21 to 41 (YLMSTHFWGPVANWGLPIAAI) form a helical membrane-spanning segment. The Mitochondrial intermembrane segment spans residues 42–52 (NDMKKSPEIIS). A helical membrane pass occupies residues 53 to 71 (GRMTFALCCYSLTFMRFAY). Position 72 is an N6-acetyllysine (lysine 72). The Mitochondrial matrix segment spans residues 72–109 (KVQPRNWLLFACHATNEVAQLIQGGRLIKHEMTKTASA).

This sequence belongs to the mitochondrial pyruvate carrier (MPC) (TC 2.A.105) family. As to quaternary structure, homodimer. Forms heterodimer with MPC2. The heterodimer is the more stable and dominant form.

The protein resides in the mitochondrion inner membrane. The enzyme catalyses pyruvate(out) + H(+)(out) = pyruvate(in) + H(+)(in). Functionally, mediates the uptake of pyruvate into mitochondria. The polypeptide is Mitochondrial pyruvate carrier 1 (MPC1) (Homo sapiens (Human)).